The sequence spans 901 residues: Alpha-actinin-3 (901 aa).

Position 1 is an N-acetylmethionine (Met1). The interval 1–261 is actin-binding; that stretch reads MMMVLQPEGL…IMTYVSCFYH (261 aa). 2 consecutive Calponin-homology (CH) domains span residues 45-149 and 158-264; these read KQQR…LRFA and TSAK…HAFA. 4 Spectrin repeats span residues 288–398, 408–513, 523–634, and 644–747; these read KLME…WLLS, HLAE…ALER, QLQL…MLQE, and RLRR…EVEN. EF-hand domains lie at 760–795 and 796–831; these read EQLNEFRASFNHFDRKRNGMMEPDDFRACLISMGYD and LGEVEFARIMTMVDPNAAGVVTFQAFIDFMTRETAE. Ca(2+) contacts are provided by Asp773, Asn777, Met779, Asp784, Asp809, and Asn811.

This sequence belongs to the alpha-actinin family. As to quaternary structure, homodimer; antiparallel. Also forms heterodimers with ACTN2. Interacts with MYOZ1.

Functionally, F-actin cross-linking protein which is thought to anchor actin to a variety of intracellular structures. This is a bundling protein. The polypeptide is Alpha-actinin-3 (ACTN3) (Bos taurus (Bovine)).